A 305-amino-acid polypeptide reads, in one-letter code: Sodium/potassium-transporting ATPase subunit beta-1 (305 aa).

Over 1 to 32 (MAREKSTDDGGGWKKFLWDSEKKQVLGRTGTS) the chain is Cytoplasmic. The helical; Signal-anchor for type II membrane protein transmembrane segment at 33–53 (WFKIFVFYLIFYGCLAGIFIG) threads the bilayer. The Extracellular portion of the chain corresponds to 54 to 305 (TIQVMLLTIS…RFEVKIEVKS (252 aa)). A glycan (N-linked (GlcNAc...) asparagine) is linked at asparagine 114. Cysteines 127 and 150 form a disulfide. An N-linked (GlcNAc...) asparagine glycan is attached at asparagine 159. Cysteines 160 and 176 form a disulfide. N-linked (GlcNAc...) asparagine glycans are attached at residues asparagine 194 and asparagine 267. A disulfide bridge links cysteine 215 with cysteine 278.

It belongs to the X(+)/potassium ATPases subunit beta family. The sodium/potassium-transporting ATPase is composed of a catalytic alpha subunit, an auxiliary non-catalytic beta subunit and an additional regulatory subunit.

It localises to the cell membrane. In terms of biological role, this is the non-catalytic component of the active enzyme, which catalyzes the hydrolysis of ATP coupled with the exchange of Na(+) and K(+) ions across the plasma membrane. The beta subunit regulates, through assembly of alpha/beta heterodimers, the number of sodium pumps transported to the plasma membrane. This chain is Sodium/potassium-transporting ATPase subunit beta-1 (atp1b1), found in Tetronarce californica (Pacific electric ray).